Reading from the N-terminus, the 244-residue chain is Probable transcriptional regulatory protein XF_1906 (244 aa).

It belongs to the TACO1 family.

The protein localises to the cytoplasm. The polypeptide is Probable transcriptional regulatory protein XF_1906 (Xylella fastidiosa (strain 9a5c)).